The chain runs to 793 residues: Putative potassium transporter 8 (793 aa).

The Cytoplasmic portion of the chain corresponds to 1 to 22 (MDLEFGRGMRSPQRDSWKTTLL). The chain crosses the membrane as a helical span at residues 23–43 (LAYQSLGVVYGDLSISPLYVF). Over 44-59 (KSTFAEDIQHSETNEE) the chain is Extracellular. Residues 60-80 (IFGVLSFVFWTLTLIPLIKYV) form a helical membrane-spanning segment. Topologically, residues 81–151 (SIVLRADDNG…EKHKKLHTAL (71 aa)) are cytoplasmic. The chain crosses the membrane as a helical span at residues 152–172 (LIMVLIGTCMVIGDGVLTPAI). At 173-191 (SVFSAVSGLEFSLSKDHRE) the chain is on the extracellular side. The chain crosses the membrane as a helical span at residues 192–212 (YAVIPITCVILAFLFALQHYG). Over 213–215 (THR) the chain is Cytoplasmic. Residues 216-236 (VGFLFAPIVLAWLICMSALGL) traverse the membrane as a helical segment. Residues 237 to 264 (YNIIHWNPHVYQALNPCYMFKFLKKTRK) are Extracellular-facing. A helical membrane pass occupies residues 265-285 (YGWMSLGGILLCMTGSEAMFA). Topologically, residues 286-292 (DLGHFSY) are cytoplasmic. The helical transmembrane segment at 293 to 313 (SAIQLAFTSLVYPALILAYMG) threads the bilayer. The Extracellular portion of the chain corresponds to 314–343 (QAAYLSKHHDFYSNSQVGFYIAVPDKVRWP). A helical membrane pass occupies residues 344 to 364 (VLVLAILASVVGSQAIISGTF). At 365–391 (SIINQSQSLSCFPRVKVVHTSDKIHGQ) the chain is on the cytoplasmic side. Residues 392 to 412 (IYIPEINWLLMILCIAVTVGF) form a helical membrane-spanning segment. Topologically, residues 413 to 422 (RDTKHMGNAS) are extracellular. Residue Asn420 is glycosylated (N-linked (GlcNAc...) asparagine). Residues 423–443 (GLAVITVMLVTTCLTSLVIML) traverse the membrane as a helical segment. Residues 444–448 (CWRRP) lie on the Cytoplasmic side of the membrane. A helical membrane pass occupies residues 449–469 (PVLALCFLLFFGSVEALYFSA). Residues 470-473 (SLIK) are Extracellular-facing. The chain crosses the membrane as a helical span at residues 474–494 (FLEGAWLPILLALFLMAVMLV). Over 495–793 (WHYTTIKKYE…LLEVGMVYVL (299 aa)) the chain is Cytoplasmic. Residues 664 to 675 (DSVQHSSAASVE) show a composition bias toward polar residues. The segment at 664-698 (DSVQHSSAASVETTTTRRRSGGGDDDGSPGGGGGR) is disordered.

The protein belongs to the HAK/KUP transporter (TC 2.A.72.3) family.

It localises to the membrane. Functionally, high-affinity potassium transporter. This chain is Putative potassium transporter 8 (HAK8), found in Oryza sativa subsp. japonica (Rice).